An 812-amino-acid chain; its full sequence is Plasminogen (812 aa).

A signal peptide spans 1–19 (MDHKEIILLFLLFLKPGQG). Residues 20–98 (DSLDGYVSTQ…RDVILFEKRV (79 aa)) enclose the PAN domain. 21 disulfide bridges follow: Cys-49–Cys-73, Cys-53–Cys-61, Cys-103–Cys-181, Cys-124–Cys-164, Cys-152–Cys-176, Cys-185–Cys-262, Cys-188–Cys-316, Cys-206–Cys-245, Cys-234–Cys-257, Cys-275–Cys-352, Cys-296–Cys-335, Cys-324–Cys-347, Cys-376–Cys-454, Cys-397–Cys-437, Cys-425–Cys-449, Cys-481–Cys-560, Cys-502–Cys-543, Cys-531–Cys-555, Cys-568–Cys-687, Cys-578–Cys-586, and Cys-609–Cys-625. Kringle domains are found at residues 102-181 (ECKT…IPEC), 184-262 (ECMY…IPRC), 274-352 (QCLK…IPSC), 375-454 (ECYQ…LKRC), and 480-560 (DCMY…IPLC). Positions 582-810 (VVGGCVANPH…YVNWIEREMR (229 aa)) constitute a Peptidase S1 domain. Ser-598 carries the phosphoserine modification. Active-site charge relay system residues include His-624 and Asp-667. Position 690 is a phosphoserine (Ser-690). Disulfide bonds link Cys-701-Cys-768, Cys-731-Cys-747, and Cys-758-Cys-786. The active-site Charge relay system is Ser-762.

It belongs to the peptidase S1 family. Plasminogen subfamily. Interacts (both mature PLG and the angiostatin peptide) with AMOT and CSPG4. Interacts (via the Kringle domains) with HRG; the interaction tethers PLG to the cell surface and enhances its activation. Interacts (via Kringle 4 domain) with ADA; the interaction stimulates PLG activation when in complex with DPP4. Angiostatin: Interacts with ATP5F1A; the interaction inhibits most of the angiogenic effects of angiostatin. In the presence of the inhibitor, the activation involves only cleavage after Arg-581, yielding two chains held together by two disulfide bonds. In the absence of the inhibitor, the activation involves additionally the removal of the activation peptide.

The protein localises to the secreted. It catalyses the reaction Preferential cleavage: Lys-|-Xaa &gt; Arg-|-Xaa, higher selectivity than trypsin. Converts fibrin into soluble products.. With respect to regulation, converted into plasmin by plasminogen activators, both plasminogen and its activator being bound to fibrin. Cannot be activated with streptokinase. Plasmin dissolves the fibrin of blood clots and acts as a proteolytic factor in a variety of other processes including embryonic development, tissue remodeling, tumor invasion, and inflammation. In ovulation, weakens the walls of the Graafian follicle. It activates the urokinase-type plasminogen activator, collagenases and several complement zymogens, such as C1, C4 and C5. Cleavage of fibronectin and laminin leads to cell detachment and apoptosis. Also cleaves fibrin, thrombospondin and von Willebrand factor. Its role in tissue remodeling and tumor invasion may be modulated by CSPG4. Binds to cells. In terms of biological role, angiostatin is an angiogenesis inhibitor that blocks neovascularization and growth of experimental primary and metastatic tumors in vivo. This is Plasminogen (Plg) from Rattus norvegicus (Rat).